The sequence spans 559 residues: Coiled-coil domain-containing protein 63 (559 aa).

Coiled coils occupy residues 14 to 70, 185 to 261, and 364 to 414; these read ELSE…QAET, EKAA…KLKS, and QQQS…VEKL.

In terms of biological role, plays a role in spermiogenesis. Involved in the elongation of flagella and the formation of sperm heads. The protein is Coiled-coil domain-containing protein 63 of Rattus norvegicus (Rat).